Consider the following 401-residue polypeptide: Acetate kinase (401 aa).

Position 9 (Asn9) interacts with Mg(2+). Position 16 (Lys16) interacts with ATP. Arg88 serves as a coordination point for substrate. Catalysis depends on Asp147, which acts as the Proton donor/acceptor. Residues 207–211 (HLGNG), 282–284 (DCR), and 333–337 (GIGEN) contribute to the ATP site. A Mg(2+)-binding site is contributed by Glu388.

It belongs to the acetokinase family. Homodimer. The cofactor is Mg(2+). Mn(2+) is required as a cofactor.

The protein localises to the cytoplasm. The catalysed reaction is acetate + ATP = acetyl phosphate + ADP. Its pathway is metabolic intermediate biosynthesis; acetyl-CoA biosynthesis; acetyl-CoA from acetate: step 1/2. Its function is as follows. Catalyzes the formation of acetyl phosphate from acetate and ATP. Can also catalyze the reverse reaction. This Haemophilus influenzae (strain 86-028NP) protein is Acetate kinase.